The primary structure comprises 145 residues: UPF0735 ACT domain-containing protein CKL_0858 (145 aa).

The ACT domain occupies 69-144; sequence TLGLTLAHKA…SVIKVNLAAV (76 aa).

Belongs to the UPF0735 family.

This is UPF0735 ACT domain-containing protein CKL_0858 from Clostridium kluyveri (strain ATCC 8527 / DSM 555 / NBRC 12016 / NCIMB 10680 / K1).